Reading from the N-terminus, the 204-residue chain is dCTP deaminase, dUMP-forming (204 aa).

DCTP is bound by residues 117–122, His-128, Gly-132, Asp-135, 143–145, Gln-163, Tyr-177, Lys-184, and Gln-188; these read RSSLGR and TLE. Glu-145 serves as the catalytic Proton donor/acceptor.

In terms of assembly, homotrimer. Two trimers assemble into a hexamer by stacking on top of each other. Requires Mg(2+) as cofactor.

It carries out the reaction dCTP + 2 H2O = dUMP + NH4(+) + diphosphate. Its pathway is pyrimidine metabolism; dUMP biosynthesis; dUMP from dCTP: step 1/1. Inhibited by dTTP. Functionally, bifunctional enzyme that catalyzes both the deamination of dCTP to dUTP and the hydrolysis of dUTP to dUMP without releasing the toxic dUTP intermediate. It also acts as a dUTP diphosphatase with a lower affinity for dUTP than for dCTP. The chain is dCTP deaminase, dUMP-forming from Methanocaldococcus jannaschii (strain ATCC 43067 / DSM 2661 / JAL-1 / JCM 10045 / NBRC 100440) (Methanococcus jannaschii).